Consider the following 24-residue polypeptide: Brevinin-1CSa (24 aa).

C18 and C24 form a disulfide bridge.

As to expression, expressed by the skin glands.

It is found in the secreted. The protein localises to the target cell membrane. Its function is as follows. Antibacterial peptide. Has activity against the Gram-positive bacterium S.aureus (MIC=2 uM) and the Gram-negative bacterium E.coli (MIC=32 uM). Has a strong hemolytic activity (LC(50)=5 uM). This chain is Brevinin-1CSa, found in Rana cascadae (Cascades frog).